Here is a 443-residue protein sequence, read N- to C-terminus: Exodeoxyribonuclease 7 large subunit (443 aa).

Belongs to the XseA family. Heterooligomer composed of large and small subunits.

Its subcellular location is the cytoplasm. The enzyme catalyses Exonucleolytic cleavage in either 5'- to 3'- or 3'- to 5'-direction to yield nucleoside 5'-phosphates.. In terms of biological role, bidirectionally degrades single-stranded DNA into large acid-insoluble oligonucleotides, which are then degraded further into small acid-soluble oligonucleotides. This chain is Exodeoxyribonuclease 7 large subunit, found in Legionella pneumophila (strain Corby).